The chain runs to 61 residues: Small ribosomal subunit protein uS14 (61 aa).

Positions 24, 27, 40, and 43 each coordinate Zn(2+).

This sequence belongs to the universal ribosomal protein uS14 family. Zinc-binding uS14 subfamily. In terms of assembly, part of the 30S ribosomal subunit. Contacts proteins S3 and S10. The cofactor is Zn(2+).

Binds 16S rRNA, required for the assembly of 30S particles and may also be responsible for determining the conformation of the 16S rRNA at the A site. The polypeptide is Small ribosomal subunit protein uS14 (Staphylococcus carnosus (strain TM300)).